Consider the following 155-residue polypeptide: Fibroblast growth factor 2 (155 aa).

Residues 1–9 (MAAGSITTL) constitute a propeptide that is removed on maturation. Positions 1–11 (MAAGSITTLPT) are enriched in polar residues. The segment at 1–24 (MAAGSITTLPTESEDGGNTPFSPG) is disordered. Heparin is bound by residues 27–31 (KDPKR) and 116–119 (RSRK).

This sequence belongs to the heparin-binding growth factors family.

It is found in the secreted. Its subcellular location is the nucleus. Acts as a ligand for FGFR1, FGFR2, FGFR3 and FGFR4. Also acts as an integrin ligand which is required for FGF2 signaling. Plays an important role in the regulation of cell survival, cell division, cell differentiation and cell migration. Functions as a potent mitogen in vitro. Can induce angiogenesis. In Xenopus laevis (African clawed frog), this protein is Fibroblast growth factor 2 (fgf2).